Consider the following 281-residue polypeptide: uncharacterized protein (281 aa).

It localises to the plastid. It is found in the chloroplast. This is an uncharacterized protein from Euglena gracilis.